The primary structure comprises 156 residues: Small ribosomal subunit protein uS7 (156 aa).

The protein belongs to the universal ribosomal protein uS7 family. In terms of assembly, part of the 30S ribosomal subunit. Contacts proteins S9 and S11.

Its function is as follows. One of the primary rRNA binding proteins, it binds directly to 16S rRNA where it nucleates assembly of the head domain of the 30S subunit. Is located at the subunit interface close to the decoding center, probably blocks exit of the E-site tRNA. In Nitrosomonas europaea (strain ATCC 19718 / CIP 103999 / KCTC 2705 / NBRC 14298), this protein is Small ribosomal subunit protein uS7.